A 409-amino-acid polypeptide reads, in one-letter code: Lissencephaly-1 homolog (409 aa).

The region spanning 7-39 (QREELNQAIADYLGTNGYADSLEAFRKEADLST) is the LisH domain. Positions 54 to 81 (TSVIRLQKKVMELEAKLTEAEKEVIEGA) form a coiled coil. WD repeat units follow at residues 104–145 (GHRA…RSLK), 146–185 (GHTD…ACVK), 189–228 (GHDH…CVKT), 231–270 (GHRE…CKVE), 273–332 (DHEH…CLLT), 335–374 (GHDN…CMKT), and 377–409 (AHQH…WECR).

This sequence belongs to the WD repeat LIS1/nudF family.

The protein localises to the cytoplasm. It localises to the cytoskeleton. The protein resides in the microtubule organizing center. Its subcellular location is the centrosome. Functionally, positively regulates the activity of the minus-end directed microtubule motor protein dynein. May enhance dynein-mediated microtubule sliding by targeting dynein to the microtubule plus end. Required for several dynein- and microtubule-dependent processes. This chain is Lissencephaly-1 homolog, found in Drosophila willistoni (Fruit fly).